We begin with the raw amino-acid sequence, 508 residues long: ATP synthase subunit alpha (508 aa).

169–176 (GDRQTGKT) is a binding site for ATP.

The protein belongs to the ATPase alpha/beta chains family. As to quaternary structure, F-type ATPases have 2 components, CF(1) - the catalytic core - and CF(0) - the membrane proton channel. CF(1) has five subunits: alpha(3), beta(3), gamma(1), delta(1), epsilon(1). CF(0) has three main subunits: a(1), b(2) and c(9-12). The alpha and beta chains form an alternating ring which encloses part of the gamma chain. CF(1) is attached to CF(0) by a central stalk formed by the gamma and epsilon chains, while a peripheral stalk is formed by the delta and b chains.

It is found in the cell inner membrane. It catalyses the reaction ATP + H2O + 4 H(+)(in) = ADP + phosphate + 5 H(+)(out). Functionally, produces ATP from ADP in the presence of a proton gradient across the membrane. The alpha chain is a regulatory subunit. The polypeptide is ATP synthase subunit alpha (Allorhizobium ampelinum (strain ATCC BAA-846 / DSM 112012 / S4) (Agrobacterium vitis (strain S4))).